A 304-amino-acid polypeptide reads, in one-letter code: Glutaminase (304 aa).

Substrate-binding residues include S63, N114, E158, N165, Y189, Y240, and V258.

This sequence belongs to the glutaminase family. Homotetramer.

It carries out the reaction L-glutamine + H2O = L-glutamate + NH4(+). The sequence is that of Glutaminase from Shewanella putrefaciens (strain CN-32 / ATCC BAA-453).